Consider the following 148-residue polypeptide: uncharacterized protein (148 aa).

The disordered stretch occupies residues 55–148; sequence KMRCGESGAG…RNQGQLYPQP (94 aa). Polar residues predominate over residues 68–104; sequence RSNSAEVSSSQPALASKSQSKWGPTSNNPRGALTTTE.

This is an uncharacterized protein from Homo sapiens (Human).